The chain runs to 360 residues: Phosphate acyltransferase (360 aa).

Residues 296 to 305 (STLRREHLDR) are compositionally biased toward basic and acidic residues. Residues 296 to 360 (STLRREHLDR…LRTAEPPGSL (65 aa)) form a disordered region. Residues 314–333 (PRQRRRPRRQKRRAACRPRP) are compositionally biased toward basic residues. Residues 334–350 (RSAAGRAPGSGVRGAAG) are compositionally biased toward low complexity.

Belongs to the PlsX family. As to quaternary structure, homodimer. Probably interacts with PlsY.

The protein localises to the cytoplasm. The enzyme catalyses a fatty acyl-[ACP] + phosphate = an acyl phosphate + holo-[ACP]. The protein operates within lipid metabolism; phospholipid metabolism. In terms of biological role, catalyzes the reversible formation of acyl-phosphate (acyl-PO(4)) from acyl-[acyl-carrier-protein] (acyl-ACP). This enzyme utilizes acyl-ACP as fatty acyl donor, but not acyl-CoA. This is Phosphate acyltransferase from Deinococcus radiodurans (strain ATCC 13939 / DSM 20539 / JCM 16871 / CCUG 27074 / LMG 4051 / NBRC 15346 / NCIMB 9279 / VKM B-1422 / R1).